The chain runs to 994 residues: MLKLLRNNGINKLKSNLIRNYSTKQSIFQALDTFPKRHIGPNENEINEMLKSINTSKLSKKNPNSLEQLIEYTIPKDIRLNRELNIEENKVIGENQLLKDLKKIAEKNKVYRSFIGMGYYGTITPHVIQRNILENPGWYTPYTPYQAEISQGRLESLLNFQTMVSEFTGLPMSNASLLDEATAAAEAMQMCVNISKSKGPFAFLVDKYCHPQTIDTIKTRAEPKGIRIEVVDSKDFKFTEDVVGCIVQYPSSNGVITDYKEMADRAHQANALVVAATDLLSLALLKPPGEWGADIALGNSQRFGVPLGFGGPHAAFFSTKDKYARLLPGRIIGVSKDKQGNSAFRMALQTREQHIRREKATSNICTSQALLANMSAMYAVYHGQQGIKDIANAVHRKAIILAEGIKRLGYTVLDRPFFDTVLIITGDKTDMMIKELESRQINVRQYCSKSISISLDETVTSADISALLNGFSAHASKPLGLSSPEQLEKETSTISVISEEFARQTPFLTHPIFNRYHSEHELLRYIHKLQKKDLGLTTAMIPLGSCTMKLNATTEMYPVSWPEFNSIHPFVPANQSLGYKEMFESISNMLCEVTGFDGCSLQPNAGSQGEYAGLMVIRSYLTSIGQSQRNVCLIPVSAHGTNPASAAMVGMKVVVVDCDTNGNIDVADLKAKAEKHKDTLAALMITYPSTHGVFEEGANDICDIIHANGGQVYMDGANMNAQVGLCRPGDIGADVCHLNLHKTFCIPHGGGGPGMGPICVKSHLAPFLPGHSVVKGVGGERAMSAVSAGPWGSSSILPITYVYLKLMGGQGLKKATQVAILNANYMASRLKDHYKILYTGSHGLVAHEFIIDLRMFKESAGIEAEDVAKRLQDMNFHGPTMSWPVPNTLMIEPTESESKYELDRLCDALILIREEIREIETGKADRKNNVLVNSPHTEKVIVADNWNYPYSRSKAAFPTPATVASKFWPTVGRIDNVHGDKNLVCSCPPLSDYQ.

The N-terminal 21 residues, 1–21 (MLKLLRNNGINKLKSNLIRNY), are a transit peptide targeting the mitochondrion. Lysine 742 carries the N6-(pyridoxal phosphate)lysine modification.

The protein belongs to the GcvP family. As to quaternary structure, homodimer. The glycine cleavage system is composed of four proteins: P, T, L and H. The cofactor is pyridoxal 5'-phosphate.

It is found in the mitochondrion. It carries out the reaction N(6)-[(R)-lipoyl]-L-lysyl-[glycine-cleavage complex H protein] + glycine + H(+) = N(6)-[(R)-S(8)-aminomethyldihydrolipoyl]-L-lysyl-[glycine-cleavage complex H protein] + CO2. In terms of biological role, the glycine cleavage system catalyzes the degradation of glycine. The P protein binds the alpha-amino group of glycine through its pyridoxal phosphate cofactor; CO(2) is released and the remaining methylamine moiety is then transferred to the lipoamide cofactor of the H protein. The chain is Glycine dehydrogenase (decarboxylating), mitochondrial (gcvP) from Dictyostelium discoideum (Social amoeba).